The following is an 81-amino-acid chain: Small ribosomal subunit protein bS20 (81 aa).

It belongs to the bacterial ribosomal protein bS20 family.

In terms of biological role, binds directly to 16S ribosomal RNA. This Mycoplasma mycoides subsp. mycoides SC (strain CCUG 32753 / NCTC 10114 / PG1) protein is Small ribosomal subunit protein bS20.